The sequence spans 697 residues: Envelope glycoprotein G (697 aa).

The N-terminal stretch at 1–22 (MHAIAPRLLLLFVLSGLPGTRG) is a signal peptide. At 23-648 (GSGVPGPINP…WFLTASPALD (626 aa)) the chain is on the virion surface side. N-linked (GlcNAc...) asparagine; by host glycosylation is found at asparagine 104 and asparagine 163. Disordered regions lie at residues 298 to 389 (HWAP…TTPP) and 402 to 630 (TPEE…PSGP). Positions 322–335 (LRTDPEGVDPDVRA) are enriched in basic and acidic residues. Composition is skewed to low complexity over residues 375-389 (DPSA…TTPP) and 402-445 (TPEE…AKTP). N-linked (GlcNAc...) asparagine; by host glycosylation is present at asparagine 435. Pro residues-rich tracts occupy residues 446-457 (PTTPAPTTPPPT) and 465-480 (PTTP…PATP). Residues 481–529 (GPVGASAAPTADSPLTALPPATAPGPSAANVSVAATTATPGTRGTARTP) show a composition bias toward low complexity. Residue asparagine 510 is glycosylated (N-linked (GlcNAc...) asparagine; by host). The span at 542-552 (DAPPGSPAPPP) shows a compositional bias: pro residues. Acidic residues predominate over residues 560–576 (EEFEGAGDGEPPEDDDS). Over residues 587–603 (PNKPPPARPGPIRPTLP) the composition is skewed to pro residues. A helical transmembrane segment spans residues 649–669 (ILFIISTTIHTAAFVCLVALA). At 670–697 (AQLWRGRAGRRRYAHPSVRYVCLPPERD) the chain is on the intravirion side.

The protein belongs to the alphaherpesvirinae glycoprotein G family.

It localises to the virion membrane. Chemokine-binding protein that inhibits neutrophils' chemotaxis. The sequence is that of Envelope glycoprotein G (gG) from Homo sapiens (Human).